A 221-amino-acid polypeptide reads, in one-letter code: Toxin coregulated pilus biosynthesis protein P (221 aa).

The ompR/PhoB-type DNA-binding region spans 5 to 109; that stretch reads RVIYQFPDNL…VKLQGYRINI (105 aa). A helical transmembrane segment spans residues 143 to 163; it reads VVPYLVFSALYVALLPVIWWS.

The protein localises to the cell membrane. Involved in TCP pilus biogenesis. The polypeptide is Toxin coregulated pilus biosynthesis protein P (tcpP) (Vibrio cholerae serotype O1 (strain ATCC 39315 / El Tor Inaba N16961)).